The sequence spans 320 residues: MIFSTLEHILTHISFSVVSIVITIHFLTLFLLVDEVVGLYDSSEKGMIVTFFCITGLLVTRWIYSGHFPLSDLYESLIFLSWGFSLIHMVSYLKFKKRKNNLSAITAPSAIFTQGFATSGLLTKMHQSAILAPALQSQWLMMHVSMMVLGYAALLCGSLLSVALLVITFRKAIKIIGENNNFSFSFGKIQYMNERSNVLLNTYFLSSKNYYRYQLTQQLDRWSYRIISLGFIFLTIGILSGAVWANEAWGSYWNWDPKETWAFITWTVFAIYFHTRTNTNLEGVNSALVASMGFLIIWICYFGVNLLGIGLHSYGSFTLN.

Transmembrane regions (helical) follow at residues 13–33 (ISFS…FLLV), 46–66 (GMIV…IYSG), 73–93 (LYES…VSYL), 102–122 (LSAI…SGLL), 147–167 (MVLG…LLVI), 226–246 (IISL…VWAN), 259–274 (ETWA…IYFH), and 289–309 (VASM…LLGI).

It belongs to the CcmF/CycK/Ccl1/NrfE/CcsA family. In terms of assembly, may interact with Ccs1.

The protein resides in the plastid. It localises to the chloroplast thylakoid membrane. Its function is as follows. Required during biogenesis of c-type cytochromes (cytochrome c6 and cytochrome f) at the step of heme attachment. The chain is Cytochrome c biogenesis protein CcsA from Gossypium hirsutum (Upland cotton).